The primary structure comprises 140 residues: Putative pre-16S rRNA nuclease (140 aa).

It belongs to the YqgF nuclease family.

The protein localises to the cytoplasm. In terms of biological role, could be a nuclease involved in processing of the 5'-end of pre-16S rRNA. In Aeromonas hydrophila subsp. hydrophila (strain ATCC 7966 / DSM 30187 / BCRC 13018 / CCUG 14551 / JCM 1027 / KCTC 2358 / NCIMB 9240 / NCTC 8049), this protein is Putative pre-16S rRNA nuclease.